Here is a 3179-residue protein sequence, read N- to C-terminus: Guanylate cyclase beta (3179 aa).

The Cytoplasmic portion of the chain corresponds to 1-60 (MKTQTLSLMNINGKRKFLGTNNKIYRKVIINPTSEDDIQKFCRNYFRIYNFSLYNFIRRL). Residues 61-81 (ISFDAILVYSLFLTVYIFSEI) traverse the membrane as a helical segment. Residues 82–88 (NHGETKK) are Extracellular-facing. The chain crosses the membrane as a helical span at residues 89 to 109 (YLFIDTAISLFFNIILLIVIE). Topologically, residues 110-295 (SLFELKKLKD…FCIKMNNIVY (186 aa)) are cytoplasmic. The helical transmembrane segment at 296 to 316 (YLIFMYFVFVVLSIVIKTIFF) threads the bilayer. Residues 317-328 (HKKNSFQNSRDS) are Extracellular-facing. Residues 329–349 (FLSMLEDFVGLYILVLPIMMY) traverse the membrane as a helical segment. Residues 350–988 (SEKSLIYIIQ…GRLNRFSLCK (639 aa)) lie on the Cytoplasmic side of the membrane. The chain crosses the membrane as a helical span at residues 989 to 1009 (VFLWIIYLKITVVSFYFFHNF). Topologically, residues 1010–1020 (DNYFSGSSASS) are extracellular. Residues 1021–1041 (ILYTQTTFALLHYFLIIAFSA) form a helical membrane-spanning segment. Over 1042–1069 (YEIDLPYKFVRRLPYIYQLSRRKYFLNN) the chain is Cytoplasmic. A helical membrane pass occupies residues 1070–1090 (NIILLTIIEAILISLTSYYIL). At 1091-1102 (RLNVFHLITHRE) the chain is on the extracellular side. A helical transmembrane segment spans residues 1103 to 1123 (FTFHIFILNVFITTEKILLLS). Residues 1124–1127 (KTWH) are Cytoplasmic-facing. A helical membrane pass occupies residues 1128 to 1148 (IYFFIMAVLIIGILLIYVNIF). Residues 1149–1168 (TLVDCIKNGKCEFSLFQMEN) are Extracellular-facing. The helical transmembrane segment at 1169 to 1189 (IYFWTSLFPILYINFIFDKLM) threads the bilayer. Over 1190–1304 (KYIKNRIYPD…YEKGNKLKLR (115 aa)) the chain is Cytoplasmic. A helical transmembrane segment spans residues 1305–1325 (IIVILLFLIYIIIFSSQTIID). Topologically, residues 1326-1331 (INTKSN) are extracellular. A helical transmembrane segment spans residues 1332 to 1352 (IHYITMFYIIYFVLACVLLIY). Residues 1353–1360 (IRIRNKAT) are Cytoplasmic-facing. The chain crosses the membrane as a helical span at residues 1361-1381 (STFFFFLSRFLLICGFCIELY). Over 1382–1401 (DNISNDILNVLITYSFTVSY) the chain is Extracellular. A glycan (N-linked (GlcNAc...) asparagine) is linked at N1383. Residues 1402 to 1422 (IFFMSFKILEALLVCISILLL) form a helical membrane-spanning segment. At 1423-1464 (TFGVYYEKNKNMIDICTHFCSNPYLSINNLDHMNISCLCKKQ) the chain is on the cytoplasmic side. The chain crosses the membrane as a helical span at residues 1465-1485 (IVIFLISLLSFTLICLSMKYY). Over 1486 to 1507 (EIFYLKKKFLFRYKQKVNLAKQ) the chain is Extracellular. Residues 1508–1528 (IEILHTMLPNFLVEYLLISDP) traverse the membrane as a helical segment. At 1529–2739 (KNDGIMVGKN…IINIDLTKKL (1211 aa)) the chain is on the cytoplasmic side. The Guanylate cyclase 1 domain occupies 1548–1700 (SVIFCDIDDF…DTVNTASRMK (153 aa)). 3 disordered regions span residues 2123-2153 (LHNYNPMKNKNKNKKNNKNVRRNEYPNYTSS), 2355-2379 (SINKQTERKPKKKNKKNIENKKDKK), and 2576-2656 (KDSD…HHHS). A compositionally biased stretch (basic residues) spans 2131–2142 (NKNKNKKNNKNV). The span at 2584 to 2607 (NNNKISKNRYNNNNNNNNSNYSNI) shows a compositional bias: low complexity. Over residues 2614-2645 (HNNKKNHHHNNNKYHHHNNNKYHHHNNNKYHH) the composition is skewed to basic residues. The chain crosses the membrane as a helical span at residues 2740-2760 (IIIFIFTEIFLSLCNIIELSF). Residues 2761 to 2770 (YEKKLRYNDS) are Extracellular-facing. N-linked (GlcNAc...) asparagine glycosylation occurs at N2768. The helical transmembrane segment at 2771-2791 (IVIIWLIRSIYLFIITYIWII) threads the bilayer. Residues 2792-2809 (LKTKLKEYKNNSSKMMWT) are Cytoplasmic-facing. Residues 2810 to 2830 (IFILNIFLCSWGIILIDLSCI) form a helical membrane-spanning segment. At 2831–2842 (HYSMLLGNKNER) the chain is on the extracellular side. The helical transmembrane segment at 2843–2863 (ALFFMKDASELIICIQLIFIK) threads the bilayer. The Cytoplasmic segment spans residues 2864–2870 (NMLFKHK). Residues 2871–2891 (FFFFVFFYIFLIYSFSKLFSI) traverse the membrane as a helical segment. At 2892–2895 (HTCQ) the chain is on the extracellular side. Residues 2896 to 2916 (THICCSIILFISINILYFWYS) traverse the membrane as a helical segment. Residues 2917-3179 (EYLDRIQFLV…KLRQKKGLRS (263 aa)) are Cytoplasmic-facing. Residues 2968-3102 (AFLFADIVGF…LDVLIANKIE (135 aa)) enclose the Guanylate cyclase 2 domain. Mg(2+)-binding residues include D2973, I2974, and D3017.

This sequence in the N-terminal section; belongs to the cation transport ATPase (P-type) (TC 3.A.3) family. Type IV subfamily. It in the C-terminal section; belongs to the adenylyl cyclase class-4/guanylyl cyclase family. The cofactor is Mg(2+). It depends on Mn(2+) as a cofactor.

It is found in the membrane. The catalysed reaction is GTP = 3',5'-cyclic GMP + diphosphate. With respect to regulation, basal guanylate activity of the recombinant guanylate cyclase domains 1 and 2 is not modulated by an increase in Ca(2+) levels or by the gametogenesis inducer xanthurenic acid. Catalyzes the synthesis of the second messenger cGMP from GTP. Regulates cGMP production in gametocytes; however, is dispensable for the initiation of gametogenesis. Does not have adenylate cyclase activity. The chain is Guanylate cyclase beta from Plasmodium falciparum (isolate 3D7).